The following is a 276-amino-acid chain: Malectin-A (276 aa).

The first 26 residues, 1 to 26 (MLSIRTVLGPLATILLTVLGPFGAHG), serve as a signal peptide directing secretion. Residues 27-253 (SGLADKVIWA…TPNPYASDNS (227 aa)) are Lumenal-facing. 5 residues coordinate a carbohydrate: Tyr67, Tyr89, Tyr116, Phe117, and Asp186. The tract at residues 204–247 (PMLQPHPGLEKKEEEEEEEEEEGSTSKKQINKNRVQSGPRTPNP) is disordered. A compositionally biased stretch (acidic residues) spans 216–226 (EEEEEEEEEEG). Polar residues predominate over residues 229 to 247 (SKKQINKNRVQSGPRTPNP). N-linked (GlcNAc...) asparagine glycosylation occurs at Asn252. The helical transmembrane segment at 254–274 (SLMFPILVAFGVFIPTLFCLC) threads the bilayer. Residues 275-276 (RL) are Cytoplasmic-facing.

The protein belongs to the malectin family. In terms of tissue distribution, widely expressed throughout development including the anterior neuroectoderm and neural crest at stages 18 and 20, and the retina, hatching gland, otic vesicle, epibranchial placodes, pronephros and tail tip of later states. At stage 41, expressed in the liver, pancreas, branchial arches and proctodeum. Expressed broadly in adults in fat, intestine, gall bladder, eye, muscle, kidney, stomach, liver, heart, pancreas and lung.

Its subcellular location is the endoplasmic reticulum membrane. Its function is as follows. Carbohydrate-binding protein with a strong ligand preference for Glc2-N-glycan. May play a role in the early steps of protein N-glycosylation. Can bind di- or higher oligomers but not monomers of glucose, including maltose, maltotriose, maltotetraose, maltoheptaose, nigerose, kojibose, cellobiose and isomaltose, although based on their subcellular locations, these are unlikely to all be physiological ligands. This is Malectin-A from Xenopus laevis (African clawed frog).